The following is a 146-amino-acid chain: Small ribosomal subunit protein uS13A (146 aa).

Residue serine 2 is modified to N-acetylserine. Lysine 36 is covalently cross-linked (Glycyl lysine isopeptide (Lys-Gly) (interchain with G-Cter in ubiquitin)). Lysine 48 carries the N6-methyllysine; by RKM1 modification. Residues lysine 49, lysine 80, and lysine 96 each participate in a glycyl lysine isopeptide (Lys-Gly) (interchain with G-Cter in ubiquitin) cross-link.

Belongs to the universal ribosomal protein uS13 family. As to quaternary structure, component of the small ribosomal subunit (SSU). Mature yeast ribosomes consist of a small (40S) and a large (60S) subunit. The 40S small subunit contains 1 molecule of ribosomal RNA (18S rRNA) and 33 different proteins (encoded by 57 genes). The large 60S subunit contains 3 rRNA molecules (25S, 5.8S and 5S rRNA) and 46 different proteins (encoded by 81 genes). N-terminally acetylated by acetyltransferase NatA.

The protein localises to the cytoplasm. Component of the ribosome, a large ribonucleoprotein complex responsible for the synthesis of proteins in the cell. The small ribosomal subunit (SSU) binds messenger RNAs (mRNAs) and translates the encoded message by selecting cognate aminoacyl-transfer RNA (tRNA) molecules. The large subunit (LSU) contains the ribosomal catalytic site termed the peptidyl transferase center (PTC), which catalyzes the formation of peptide bonds, thereby polymerizing the amino acids delivered by tRNAs into a polypeptide chain. The nascent polypeptides leave the ribosome through a tunnel in the LSU and interact with protein factors that function in enzymatic processing, targeting, and the membrane insertion of nascent chains at the exit of the ribosomal tunnel. In Saccharomyces cerevisiae (strain ATCC 204508 / S288c) (Baker's yeast), this protein is Small ribosomal subunit protein uS13A.